Here is a 325-residue protein sequence, read N- to C-terminus: MKLFVHLSIFFSILFITLPSSYSCTENDKNALLQIKKALGNPPLLSSWNPRTDCCTGWTGVECTNRRVTGLSVTSGEVSGQISYQIGDLVDLRTLDFSYLPHLTGNIPRTITKLKNLNTLYLKHTSLSGPIPDYISELKSLTFLDLSFNQFTGPIPGSLSQMPKLEAIQINDNKLTGSIPNSFGSFVGNVPNLYLSNNKLSGKIPESLSKYDFNAVDLSGNGFEGDAFMFFGRNKTTVRVDLSRNMFNFDLVKVKFARSIVSLDLSQNHIYGKIPPALTKLHLEHFNVSDNHLCGKIPSGGLLQTFEPSAFAHNICLCGTPLKAC.

10 LRR repeats span residues 65–88 (NRRV…QIGD), 89–114 (LVDL…ITKL), 115–140 (KNLN…ELKS), 142–162 (TFLD…LSQM), 163–185 (PKLE…SFGS), 187–211 (VGNV…LSKY), 213–233 (FNAV…FFGR), 234–256 (NKTT…KVKF), 257–280 (ARSI…ALTK), and 281–305 (LHLE…LLQT).

Belongs to the polygalacturonase-inhibiting protein family. Interacts with MADS domain transcription factors during flower development. Component of a complex made of FLOR1, VSP1 and AGAMOUS (AG). Binds directly with AG. Confined to flowers and inflorescences (e.g. inflorescence meristems, floral meristems, stamens and carpels).

The protein resides in the cytoplasm. Its subcellular location is the nucleus. It localises to the perinuclear region. It is found in the cell membrane. Promotes flowering transition in long days (LD). This Arabidopsis thaliana (Mouse-ear cress) protein is Leucine-rich repeat protein FLOR 1.